Reading from the N-terminus, the 400-residue chain is Acetate kinase (400 aa).

Asn10 contributes to the Mg(2+) binding site. Lys17 contributes to the ATP binding site. Arg91 provides a ligand contact to substrate. Asp150 functions as the Proton donor/acceptor in the catalytic mechanism. ATP is bound by residues 210–214, 285–287, and 333–337; these read HLGNG, DCR, and GIGEN. Position 387 (Glu387) interacts with Mg(2+).

This sequence belongs to the acetokinase family. Homodimer. The cofactor is Mg(2+). Mn(2+) is required as a cofactor.

The protein resides in the cytoplasm. It catalyses the reaction acetate + ATP = acetyl phosphate + ADP. Its pathway is metabolic intermediate biosynthesis; acetyl-CoA biosynthesis; acetyl-CoA from acetate: step 1/2. Catalyzes the formation of acetyl phosphate from acetate and ATP. Can also catalyze the reverse reaction. This chain is Acetate kinase, found in Serratia proteamaculans (strain 568).